The sequence spans 195 residues: Probable molybdenum cofactor guanylyltransferase (195 aa).

Residues 9–11 (LAG), lysine 21, aspartate 69, and aspartate 100 each bind GTP. A Mg(2+)-binding site is contributed by aspartate 100.

Belongs to the MobA family. It depends on Mg(2+) as a cofactor.

The protein resides in the cytoplasm. The enzyme catalyses Mo-molybdopterin + GTP + H(+) = Mo-molybdopterin guanine dinucleotide + diphosphate. Its function is as follows. Transfers a GMP moiety from GTP to Mo-molybdopterin (Mo-MPT) cofactor (Moco or molybdenum cofactor) to form Mo-molybdopterin guanine dinucleotide (Mo-MGD) cofactor. The chain is Probable molybdenum cofactor guanylyltransferase from Geobacillus sp. (strain WCH70).